Consider the following 348-residue polypeptide: Histidinol-phosphate aminotransferase (348 aa).

Position 210 is an N6-(pyridoxal phosphate)lysine (lysine 210).

This sequence belongs to the class-II pyridoxal-phosphate-dependent aminotransferase family. Histidinol-phosphate aminotransferase subfamily. As to quaternary structure, homodimer. Pyridoxal 5'-phosphate is required as a cofactor.

The catalysed reaction is L-histidinol phosphate + 2-oxoglutarate = 3-(imidazol-4-yl)-2-oxopropyl phosphate + L-glutamate. Its pathway is amino-acid biosynthesis; L-histidine biosynthesis; L-histidine from 5-phospho-alpha-D-ribose 1-diphosphate: step 7/9. The sequence is that of Histidinol-phosphate aminotransferase from Cytophaga hutchinsonii (strain ATCC 33406 / DSM 1761 / CIP 103989 / NBRC 15051 / NCIMB 9469 / D465).